Consider the following 201-residue polypeptide: Inosine triphosphate pyrophosphatase (201 aa).

13-18 (TGNAKK) provides a ligand contact to ITP. Glutamate 43 contributes to the Mg(2+) binding site. ITP is bound by residues lysine 55, 71–72 (DT), lysine 88, 148–151 (FGWD), lysine 171, and 176–177 (HR).

It belongs to the HAM1 NTPase family. In terms of assembly, homodimer. It depends on Mg(2+) as a cofactor. Mn(2+) is required as a cofactor.

Its subcellular location is the cytoplasm. The catalysed reaction is ITP + H2O = IMP + diphosphate + H(+). It catalyses the reaction dITP + H2O = dIMP + diphosphate + H(+). It carries out the reaction XTP + H2O = XMP + diphosphate + H(+). The enzyme catalyses N(6)-hydroxy-dATP + H2O = N(6)-hydroxy-dAMP + diphosphate + H(+). Its function is as follows. Pyrophosphatase that hydrolyzes the non-canonical purine nucleotides inosine triphosphate (ITP), deoxyinosine triphosphate (dITP) as well as 2'-deoxy-N-6-hydroxylaminopurine triphosphate (dHAPTP) and xanthosine 5'-triphosphate (XTP) to their respective monophosphate derivatives. The enzyme does not distinguish between the deoxy- and ribose forms. Probably excludes non-canonical purines from RNA and DNA precursor pools, thus preventing their incorporation into RNA and DNA and avoiding chromosomal lesions. In Gallus gallus (Chicken), this protein is Inosine triphosphate pyrophosphatase.